Reading from the N-terminus, the 328-residue chain is Malate dehydrogenase (328 aa).

12 to 18 is a binding site for NAD(+); sequence GAAGQIG. 2 residues coordinate substrate: R93 and R99. Residues N106, Q113, and 130–132 each bind NAD(+); that span reads VGN. Positions 132 and 163 each coordinate substrate. The active-site Proton acceptor is the H188.

This sequence belongs to the LDH/MDH superfamily. MDH type 2 family.

The enzyme catalyses (S)-malate + NAD(+) = oxaloacetate + NADH + H(+). Functionally, catalyzes the reversible oxidation of malate to oxaloacetate. In Saccharopolyspora erythraea (strain ATCC 11635 / DSM 40517 / JCM 4748 / NBRC 13426 / NCIMB 8594 / NRRL 2338), this protein is Malate dehydrogenase.